We begin with the raw amino-acid sequence, 356 residues long: Arginine kinase (356 aa).

The 83-residue stretch at 9–91 (KLEAGFQKLQ…FDPIIEDYHI (83 aa)) folds into the Phosphagen kinase N-terminal domain. 64 to 68 (GVGIY) is an L-arginine binding site. The region spanning 119–356 (FVISTRVRCG…AELIKLEQSA (238 aa)) is the Phosphagen kinase C-terminal domain. ATP-binding positions include 122–126 (STRVR) and H185. E225 contacts L-arginine. R229 is a binding site for ATP. C271 contacts L-arginine. ATP is bound by residues 280 to 284 (RASVH) and 309 to 314 (RGTRGE). E314 contacts L-arginine.

It belongs to the ATP:guanido phosphotransferase family.

It carries out the reaction L-arginine + ATP = N(omega)-phospho-L-arginine + ADP + H(+). The chain is Arginine kinase (ARGK) from Artemia franciscana (Brine shrimp).